A 203-amino-acid polypeptide reads, in one-letter code: Acid phosphatase (203 aa).

H13 serves as the catalytic Tele-phosphohistidine intermediate. E85 serves as the catalytic Proton donor/acceptor.

It belongs to the phosphoglycerate mutase family. In terms of assembly, homodimer.

The catalysed reaction is a phosphate monoester + H2O = an alcohol + phosphate. It catalyses the reaction beta-D-fructose 1,6-bisphosphate + H2O = beta-D-fructose 6-phosphate + phosphate. Its pathway is carbohydrate biosynthesis; gluconeogenesis. With respect to regulation, in contrast to classical FBPases, is resistant to inhibition by lithium. Its function is as follows. Phosphatase with a broad specificity. Can dephosphorylate a variety of substrates including phosphorylated sugars like fructose-6-phosphate (F6P). Is able to function in vivo as a fructose-1,6-bisphosphatase (FBPase) and to maintain gluconeogenesis when the classical FBPase GlpX is absent. Shows negligible phosphoglycerate mutase activity. Has no phosphatase activity against 3-phosphoglycerate, 2,3-bisphosphoglycerate, or hydrophobic substrates such as alpha-napthyl phosphate. In Mycobacterium tuberculosis (strain ATCC 25618 / H37Rv), this protein is Acid phosphatase.